Reading from the N-terminus, the 227-residue chain is ATP synthase F(0) complex subunit a (227 aa).

6 helical membrane-spanning segments follow: residues 12–32, 69–89, 98–118, 139–159, 170–190, and 196–216; these read PCLL…LLLP, WALL…LGLL, QLSM…LTGL, IPAL…ALGV, LLIQ…PSIS, and ILFL…YVFV.

The protein belongs to the ATPase A chain family. Component of the ATP synthase complex composed at least of ATP5F1A/subunit alpha, ATP5F1B/subunit beta, ATP5MC1/subunit c (homooctomer), MT-ATP6/subunit a, MT-ATP8/subunit 8, ATP5ME/subunit e, ATP5MF/subunit f, ATP5MG/subunit g, ATP5MK/subunit k, ATP5MJ/subunit j, ATP5F1C/subunit gamma, ATP5F1D/subunit delta, ATP5F1E/subunit epsilon, ATP5PF/subunit F6, ATP5PB/subunit b, ATP5PD/subunit d, ATP5PO/subunit OSCP. ATP synthase complex consists of a soluble F(1) head domain (subunits alpha(3) and beta(3)) - the catalytic core - and a membrane F(0) domain - the membrane proton channel (subunits c, a, 8, e, f, g, k and j). These two domains are linked by a central stalk (subunits gamma, delta, and epsilon) rotating inside the F1 region and a stationary peripheral stalk (subunits F6, b, d, and OSCP). Interacts with DNAJC30; interaction is direct.

The protein localises to the mitochondrion inner membrane. The catalysed reaction is H(+)(in) = H(+)(out). In terms of biological role, subunit a, of the mitochondrial membrane ATP synthase complex (F(1)F(0) ATP synthase or Complex V) that produces ATP from ADP in the presence of a proton gradient across the membrane which is generated by electron transport complexes of the respiratory chain. ATP synthase complex consist of a soluble F(1) head domain - the catalytic core - and a membrane F(1) domain - the membrane proton channel. These two domains are linked by a central stalk rotating inside the F(1) region and a stationary peripheral stalk. During catalysis, ATP synthesis in the catalytic domain of F(1) is coupled via a rotary mechanism of the central stalk subunits to proton translocation. With the subunit c (ATP5MC1), forms the proton-conducting channel in the F(0) domain, that contains two crucial half-channels (inlet and outlet) that facilitate proton movement from the mitochondrial intermembrane space (IMS) into the matrix. Protons are taken up via the inlet half-channel and released through the outlet half-channel, following a Grotthuss mechanism. The chain is ATP synthase F(0) complex subunit a from Gallus gallus (Chicken).